Consider the following 222-residue polypeptide: Protein GrpE (222 aa).

The tract at residues 1 to 64 (MSDQNLGQGS…GEEILSDDDL (64 aa)) is disordered. Residues 16–44 (EEPIVRDKRRIDPETGKVREPQDLSHEEL) are compositionally biased toward basic and acidic residues. The span at 54–64 (QGEEILSDDDL) shows a compositional bias: acidic residues.

The protein belongs to the GrpE family. As to quaternary structure, homodimer.

The protein resides in the cytoplasm. Its function is as follows. Participates actively in the response to hyperosmotic and heat shock by preventing the aggregation of stress-denatured proteins, in association with DnaK and GrpE. It is the nucleotide exchange factor for DnaK and may function as a thermosensor. Unfolded proteins bind initially to DnaJ; upon interaction with the DnaJ-bound protein, DnaK hydrolyzes its bound ATP, resulting in the formation of a stable complex. GrpE releases ADP from DnaK; ATP binding to DnaK triggers the release of the substrate protein, thus completing the reaction cycle. Several rounds of ATP-dependent interactions between DnaJ, DnaK and GrpE are required for fully efficient folding. The protein is Protein GrpE of Leifsonia xyli subsp. xyli (strain CTCB07).